The sequence spans 337 residues: Anthranilate phosphoribosyltransferase (337 aa).

Residues Gly-81, Gly-84–Asp-85, Ser-89, Asn-91–Thr-94, Lys-109–Ser-117, and Ala-121 each bind 5-phospho-alpha-D-ribose 1-diphosphate. Position 81 (Gly-81) interacts with anthranilate. Mg(2+) is bound at residue Ser-93. Residue Asn-112 coordinates anthranilate. Arg-167 is a binding site for anthranilate. Positions 226 and 227 each coordinate Mg(2+).

It belongs to the anthranilate phosphoribosyltransferase family. In terms of assembly, homodimer. Mg(2+) is required as a cofactor.

The catalysed reaction is N-(5-phospho-beta-D-ribosyl)anthranilate + diphosphate = 5-phospho-alpha-D-ribose 1-diphosphate + anthranilate. It participates in amino-acid biosynthesis; L-tryptophan biosynthesis; L-tryptophan from chorismate: step 2/5. Functionally, catalyzes the transfer of the phosphoribosyl group of 5-phosphorylribose-1-pyrophosphate (PRPP) to anthranilate to yield N-(5'-phosphoribosyl)-anthranilate (PRA). The polypeptide is Anthranilate phosphoribosyltransferase (Methylobacterium nodulans (strain LMG 21967 / CNCM I-2342 / ORS 2060)).